The sequence spans 213 residues: uncharacterized protein (213 aa).

The segment covering 1–14 (MSSDVLVTTPAQRQ) has biased composition (polar residues). Positions 1–26 (MSSDVLVTTPAQRQTEPHAEAVSRNR) are disordered. An HTH tetR-type domain is found at 29-89 (QATFRKVLAA…EVYLDLVRQV (61 aa)).

This is an uncharacterized protein from Mycobacterium tuberculosis (strain CDC 1551 / Oshkosh).